We begin with the raw amino-acid sequence, 531 residues long: Light-independent protochlorophyllide reductase subunit B (531 aa).

[4Fe-4S] cluster is bound at residue Asp-36. Asp-291 acts as the Proton donor in catalysis. 426–427 (GL) contacts substrate.

This sequence belongs to the ChlB/BchB/BchZ family. Protochlorophyllide reductase is composed of three subunits; ChlL, ChlN and ChlB. Forms a heterotetramer of two ChlB and two ChlN subunits. Requires [4Fe-4S] cluster as cofactor.

It catalyses the reaction chlorophyllide a + oxidized 2[4Fe-4S]-[ferredoxin] + 2 ADP + 2 phosphate = protochlorophyllide a + reduced 2[4Fe-4S]-[ferredoxin] + 2 ATP + 2 H2O. It functions in the pathway porphyrin-containing compound metabolism; chlorophyll biosynthesis (light-independent). Component of the dark-operative protochlorophyllide reductase (DPOR) that uses Mg-ATP and reduced ferredoxin to reduce ring D of protochlorophyllide (Pchlide) to form chlorophyllide a (Chlide). This reaction is light-independent. The NB-protein (ChlN-ChlB) is the catalytic component of the complex. This Prochlorococcus marinus (strain MIT 9211) protein is Light-independent protochlorophyllide reductase subunit B.